We begin with the raw amino-acid sequence, 359 residues long: Phospho-N-acetylmuramoyl-pentapeptide-transferase (359 aa).

A run of 10 helical transmembrane segments spans residues 27–47 (IYAL…MMRW), 73–93 (TMGG…WADL), 94–114 (TNIY…VGFV), 134–154 (LLGQ…QPAY), 166–186 (FTPD…IGAS), 197–217 (GLAI…IYIA), 233–253 (GVGE…GFLW), 261–281 (LFMG…IAVL), 286–306 (LLLI…IMQV), and 336–356 (KIVI…LSTL).

Belongs to the glycosyltransferase 4 family. MraY subfamily. The cofactor is Mg(2+).

The protein resides in the cell inner membrane. It catalyses the reaction UDP-N-acetyl-alpha-D-muramoyl-L-alanyl-gamma-D-glutamyl-meso-2,6-diaminopimeloyl-D-alanyl-D-alanine + di-trans,octa-cis-undecaprenyl phosphate = di-trans,octa-cis-undecaprenyl diphospho-N-acetyl-alpha-D-muramoyl-L-alanyl-D-glutamyl-meso-2,6-diaminopimeloyl-D-alanyl-D-alanine + UMP. It functions in the pathway cell wall biogenesis; peptidoglycan biosynthesis. In terms of biological role, catalyzes the initial step of the lipid cycle reactions in the biosynthesis of the cell wall peptidoglycan: transfers peptidoglycan precursor phospho-MurNAc-pentapeptide from UDP-MurNAc-pentapeptide onto the lipid carrier undecaprenyl phosphate, yielding undecaprenyl-pyrophosphoryl-MurNAc-pentapeptide, known as lipid I. The sequence is that of Phospho-N-acetylmuramoyl-pentapeptide-transferase from Maridesulfovibrio salexigens (strain ATCC 14822 / DSM 2638 / NCIMB 8403 / VKM B-1763) (Desulfovibrio salexigens).